The sequence spans 967 residues: Probable disease resistance protein At1g61190 (967 aa).

A coiled-coil region spans residues 20–68 (RCLCGKGYIRNLEKNLRALQREMEDLRATQHEVQNKVAREESRHQQRLE). A disordered region spans residues 132 to 153 (GNFDEVSQPPPRSEVEERPTQP). Residues 138-441 (SQPPPRSEVE…CEGFIGEDQV (304 aa)) form the NB-ARC domain. 180–187 (GMGGVGKT) is an ATP binding site. LRR repeat units lie at residues 516-537 (AVRR…SKCS), 538-559 (ELTT…FIRY), 562-585 (KLVV…SGLV), 586-608 (SLQY…KELK), and 609-631 (KLIF…SRLL).

This sequence belongs to the disease resistance NB-LRR family.

In terms of biological role, probable disease resistance protein. The chain is Probable disease resistance protein At1g61190 from Arabidopsis thaliana (Mouse-ear cress).